We begin with the raw amino-acid sequence, 449 residues long: Probable glycine dehydrogenase (decarboxylating) subunit 1 (449 aa).

The protein belongs to the GcvP family. N-terminal subunit subfamily. As to quaternary structure, the glycine cleavage system is composed of four proteins: P, T, L and H. In this organism, the P 'protein' is a heterodimer of two subunits.

The catalysed reaction is N(6)-[(R)-lipoyl]-L-lysyl-[glycine-cleavage complex H protein] + glycine + H(+) = N(6)-[(R)-S(8)-aminomethyldihydrolipoyl]-L-lysyl-[glycine-cleavage complex H protein] + CO2. The glycine cleavage system catalyzes the degradation of glycine. The P protein binds the alpha-amino group of glycine through its pyridoxal phosphate cofactor; CO(2) is released and the remaining methylamine moiety is then transferred to the lipoamide cofactor of the H protein. In Solibacter usitatus (strain Ellin6076), this protein is Probable glycine dehydrogenase (decarboxylating) subunit 1.